The following is a 292-amino-acid chain: Release factor glutamine methyltransferase (292 aa).

S-adenosyl-L-methionine-binding positions include 126–130, aspartate 157, tryptophan 184, and asparagine 198; that span reads GTGTG. 198–201 contacts substrate; the sequence is NPPY.

This sequence belongs to the protein N5-glutamine methyltransferase family. PrmC subfamily.

It catalyses the reaction L-glutaminyl-[peptide chain release factor] + S-adenosyl-L-methionine = N(5)-methyl-L-glutaminyl-[peptide chain release factor] + S-adenosyl-L-homocysteine + H(+). Its function is as follows. Methylates the class 1 translation termination release factors RF1/PrfA and RF2/PrfB on the glutamine residue of the universally conserved GGQ motif. The chain is Release factor glutamine methyltransferase from Haemophilus influenzae (strain ATCC 51907 / DSM 11121 / KW20 / Rd).